The primary structure comprises 133 residues: MSTEASTGETPEFQSYDHRGSPTQEAMKREIQSLIQNLVKLSRTAPAIHVLIPPEIVMYVEGSRNPDIYNREFVETVQRMNQMLKGRSEALQALQAQIAHQLQIAIPEMKDDIERAVEATGGKVPITGITLDP.

The segment covering Met-1 to Phe-13 has biased composition (polar residues). Residues Met-1 to Lys-28 are disordered. The segment covering Ser-15–Lys-28 has biased composition (basic and acidic residues).

It belongs to the Mediator complex subunit 10 family. In terms of assembly, component of the Mediator complex.

The protein resides in the nucleus. Its function is as follows. Component of the Mediator complex, a coactivator involved in the regulated transcription of nearly all RNA polymerase II-dependent genes. Mediator functions as a bridge to convey information from gene-specific regulatory proteins to the basal RNA polymerase II transcription machinery. Mediator is recruited to promoters by direct interactions with regulatory proteins and serves as a scaffold for the assembly of a functional preinitiation complex with RNA polymerase II and the general transcription factors. The sequence is that of Mediator of RNA polymerase II transcription subunit 10 (NUT2) from Phaeosphaeria nodorum (strain SN15 / ATCC MYA-4574 / FGSC 10173) (Glume blotch fungus).